The chain runs to 453 residues: Ribulose bisphosphate carboxylase large chain (453 aa).

Positions 1 to 2 (MS) are excised as a propeptide. Residue P3 is modified to N-acetylproline. The residue at position 14 (K14) is an N6,N6,N6-trimethyllysine. Substrate is bound by residues N123 and T173. The active-site Proton acceptor is the K175. K177 provides a ligand contact to substrate. Residues K201, D203, and E204 each coordinate Mg(2+). An N6-carboxylysine modification is found at K201. H294 functions as the Proton acceptor in the catalytic mechanism. Positions 295, 327, and 379 each coordinate substrate.

The protein belongs to the RuBisCO large chain family. Type I subfamily. In terms of assembly, heterohexadecamer of 8 large chains and 8 small chains; disulfide-linked. The disulfide link is formed within the large subunit homodimers. Mg(2+) serves as cofactor. Post-translationally, the disulfide bond which can form in the large chain dimeric partners within the hexadecamer appears to be associated with oxidative stress and protein turnover.

It is found in the plastid. Its subcellular location is the chloroplast. The catalysed reaction is 2 (2R)-3-phosphoglycerate + 2 H(+) = D-ribulose 1,5-bisphosphate + CO2 + H2O. The enzyme catalyses D-ribulose 1,5-bisphosphate + O2 = 2-phosphoglycolate + (2R)-3-phosphoglycerate + 2 H(+). Functionally, ruBisCO catalyzes two reactions: the carboxylation of D-ribulose 1,5-bisphosphate, the primary event in carbon dioxide fixation, as well as the oxidative fragmentation of the pentose substrate in the photorespiration process. Both reactions occur simultaneously and in competition at the same active site. The chain is Ribulose bisphosphate carboxylase large chain from Galium corsicum.